The sequence spans 417 residues: Trafficking protein particle complex subunit 13 (417 aa).

Belongs to the TRAPPC13 family. Part of the multisubunit TRAPP (transport protein particle) complex.

The sequence is that of Trafficking protein particle complex subunit 13 (TRAPPC13) from Pongo abelii (Sumatran orangutan).